A 546-amino-acid polypeptide reads, in one-letter code: Immunoglobulin-like domain-containing receptor 1 (546 aa).

Positions 1 to 23 (MAWPKLPAPWLLLCTWLPAGCLS) are cleaved as a signal peptide. The region spanning 24 to 162 (LLVTVQHTER…TSGDPDKEVK (139 aa)) is the Ig-like V-type domain. The Extracellular portion of the chain corresponds to 24–167 (LLVTVQHTER…DKEVKLIVLH (144 aa)). Cysteines 45 and 145 form a disulfide. The chain crosses the membrane as a helical span at residues 168–188 (WLTVIFIILGALLLLLLIGVC). The Cytoplasmic portion of the chain corresponds to 189-546 (WCQCCPQYCC…SSHSGRSVVI (358 aa)). The segment at 399–546 (WSGRHRSSRL…SSHSGRSVVI (148 aa)) is disordered. Over residues 442 to 457 (RCQERPRRPSPRESTQ) the composition is skewed to basic and acidic residues. The segment covering 458–467 (RHGRRRRHRS) has biased composition (basic residues). Ser499 and Ser501 each carry phosphoserine. The segment covering 527-539 (GSVERRSEKDSSH) has biased composition (basic and acidic residues).

This sequence belongs to the immunoglobulin superfamily. LISCH7 family. Homooligomer. Interacts with MARVELD2 and OCLN; the interaction is required to recruit MARVELD2 to tricellular contacts. Interacts (via C-terminus) with TRA2A, TRA2B and SRSF1. Interacts with PLSCR1.

It localises to the cell membrane. It is found in the cell junction. The protein resides in the tight junction. The protein localises to the nucleus. Its subcellular location is the cytoplasm. In terms of biological role, maintains epithelial barrier function by recruiting MARVELD2/tricellulin to tricellular tight junctions (tTJs). Crucial for normal hearing by maintaining the structural and functional integrity of tTJs, which are critical for the survival of auditory neurosensory HCs. Mediates fatty acids and lipoproteins-stimulated CCK/cholecystokinin secretion in the small intestine. In the inner ear, may regulate alternative pre-mRNA splicing via binding to TRA2A, TRA2B and SRSF1. The polypeptide is Immunoglobulin-like domain-containing receptor 1 (ILDR1) (Pongo abelii (Sumatran orangutan)).